We begin with the raw amino-acid sequence, 1137 residues long: MSSSRSNNRATCSRSSSARSKHSARVVAQTPMDAQLHAEFEGSQRHFDYSSSVGAANRSGATTSNVSAYLQNMQRGRFVQPFGCLLAVHPETFALLAYSENAAEMLDLTPHAVPTIDQREALAVGTDVRTLFRSHSFVALQKAATFGDVNLLNPILVHARTSGKPFYAIMHRIDVGLVIDLEPVNPVDLPVTATGAIKSYKLAARAIARLQSLPSGNLSLLCDVLVREVSELTGYDRVMAYKFHEDEHGEVIAECKRSDLEPYLGLHYPATDIPQASRFLFMKNKVRMICDCSATPVKIIQDDSLTQPISICGSTLRAPHGCHAQYMASMGSVASLVMSVTINEDEDDDGDTGSDQQPKGRKLWGLMVCHHTSPRFVPFPLRYACEFLLQVFGIQINKEVELAAQAKERHILRTQTLLCDMLLRDAPVGIFTQSPNVMDLVKCDGAALYYQNQLWVLGSTPSEAEIKNIVAWLQEYHDGSTGLSTDSLVEAGYPGAAALGDVVCGMAAIKISSKDFIFWFRSHTAKEIKWGGAKHEPIDADDNGRKMHPRSSFKAFLEVVKWRSVPWEDVEMDAIHSLQLILRGSLQDEDANKNNNAKSIVTAPSDDMKKIQGLLELRTVTNEMVRLIETATAPILAVDITGSINGWNNKAAELTGLPVMEAIGKPLVDLVIDDSVEVVKQILNSALQGIEEQNLQIKLKTFNHQENNGPVILMVNACCSRDLSEKVVGVCFVAQDMTGQNIIMDKYTRIQGDYVAIVKNPSELIPPIFMINDLGSCLEWNEAMQKITGIKREDAVDKLLIGEVFTHHEYGCRVKDHGTLTKLSILMNTVISGQDPEKLLFGFFNTDGKYIESLMTATKRTDAEGKITGALCFLHVASPELQHALQVQKMSEQAAMNSFKELTYIRQELRNPLNGMQFTRNLLEPSDLTEEQRKLLASNVLCQEQLKKILHDTDLESIEQCYTEMSTVDFNLEEALNTVLMQAMPQSKEKQISIDRDWPAEVSCMHLCGDNLRLQQVLADFLACMLQFTQPAEGPIVLQVIPRMENIGSGMQIAHLEFRLVHPAPGVPEALIQEMFRHSPGASREGLGLYISQKLVKTMSGTVQYLRESESSSFIVLVEFPVAQLSTKRCKASTSKF.

Residues 1 to 18 (MSSSRSNNRATCSRSSSA) show a composition bias toward low complexity. The segment at 1-27 (MSSSRSNNRATCSRSSSARSKHSARVV) is disordered. Residues 217 to 400 (NLSLLCDVLV…VFGIQINKEV (184 aa)) form the GAF domain. Residue Cys-322 participates in phytochromobilin binding. 2 consecutive PAS domains span residues 620–690 (VTNE…LQGI) and 750–824 (IQGD…TKLS). The region spanning 904-1124 (YIRQELRNPL…IVLVEFPVAQ (221 aa)) is the Histidine kinase domain.

Belongs to the phytochrome family. In terms of assembly, homodimer. Contains one covalently linked phytochromobilin chromophore.

Functionally, regulatory photoreceptor which exists in two forms that are reversibly interconvertible by light: the Pr form that absorbs maximally in the red region of the spectrum and the Pfr form that absorbs maximally in the far-red region. Photoconversion of Pr to Pfr induces an array of morphogenic responses, whereas reconversion of Pfr to Pr cancels the induction of those responses. Pfr controls the expression of a number of nuclear genes including those encoding the small subunit of ribulose-bisphosphate carboxylase, chlorophyll A/B binding protein, protochlorophyllide reductase, rRNA, etc. It also controls the expression of its own gene(s) in a negative feedback fashion. The chain is Phytochrome C (PHYC) from Oryza sativa subsp. japonica (Rice).